A 111-amino-acid chain; its full sequence is Disintegrin DS-AS (111 aa).

Residues 1–20 (MIQVLLVIICLAVFPYQGSC) form the signal peptide. A propeptide spanning residues 21 to 47 (IILESGNVNDYEIVYPKKLIVLPTGAM) is cleaved from the precursor. Residues 47 to 111 (MNSPHPCCDP…PDCPRNPYKD (65 aa)) form the Disintegrin domain. Disulfide bonds link cysteine 53–cysteine 76, cysteine 67–cysteine 73, cysteine 72–cysteine 97, and cysteine 85–cysteine 104. The short motif at 89–91 (RGD) is the Cell attachment site element.

Heterodimer; disulfide-linked.

Its subcellular location is the secreted. Inhibits ADP-induced platelet aggregation in human platelet-rich plasma (IC(50) is 8 uM). This chain is Disintegrin DS-AS, found in Atheris squamigera (Variable bush viper).